The sequence spans 301 residues: Putative dynamin-related protein 4A (301 aa).

A Dynamin-type G domain is found at 59-301 (GIQLPTIVVV…LIDGDIVGIL (243 aa)). The G1 motif stretch occupies residues 69–76 (GDQSSGKS). Position 69–76 (69–76 (GDQSSGKS)) interacts with GTP. The segment at 94–96 (CTR) is G2 motif. Positions 168 to 171 (DLPG) are G3 motif. Residues 168–172 (DLPGI) and 237–240 (TKAD) contribute to the GTP site. The segment at 237-240 (TKAD) is G4 motif. A region of interest (G5 motif) is located at residue glutamate 270.

The protein belongs to the TRAFAC class dynamin-like GTPase superfamily. Dynamin/Fzo/YdjA family.

This Arabidopsis thaliana (Mouse-ear cress) protein is Putative dynamin-related protein 4A (DRP4A).